Here is a 336-residue protein sequence, read N- to C-terminus: Flap endonuclease 1 (336 aa).

Residues 1–98 (MGVDLGDILS…GTLAARAQMK (98 aa)) form an N-domain region. Mg(2+)-binding residues include Asp-27, Asp-80, Glu-150, Glu-152, Asp-171, Asp-173, and Asp-234. Residues 114–255 (DSFRYAQATA…RALKLIREHG (142 aa)) are I-domain. The interaction with PCNA stretch occupies residues 328 to 336 (GQSTLERWL).

It belongs to the XPG/RAD2 endonuclease family. FEN1 subfamily. As to quaternary structure, interacts with PCNA. PCNA stimulates the nuclease activity without altering cleavage specificity. It depends on Mg(2+) as a cofactor.

Its function is as follows. Structure-specific nuclease with 5'-flap endonuclease and 5'-3' exonuclease activities involved in DNA replication and repair. During DNA replication, cleaves the 5'-overhanging flap structure that is generated by displacement synthesis when DNA polymerase encounters the 5'-end of a downstream Okazaki fragment. Binds the unpaired 3'-DNA end and kinks the DNA to facilitate 5' cleavage specificity. Cleaves one nucleotide into the double-stranded DNA from the junction in flap DNA, leaving a nick for ligation. Also involved in the base excision repair (BER) pathway. Acts as a genome stabilization factor that prevents flaps from equilibrating into structures that lead to duplications and deletions. Also possesses 5'-3' exonuclease activity on nicked or gapped double-stranded DNA. This chain is Flap endonuclease 1, found in Methanothrix thermoacetophila (strain DSM 6194 / JCM 14653 / NBRC 101360 / PT) (Methanosaeta thermophila).